A 557-amino-acid polypeptide reads, in one-letter code: MSYNRRSKNITQGVARSPNRSMYYALGYQKEDFDKPMIGIANGHSTITPCNAGLQRLSDAAVAAVKDAGANPQIFGTPTISDGMSMGTEGMKYSLVSREVIADCIETCVQGQWMDGVVVVGGCDKNMPGGMIALARINVPGIYVYGGTIRPGHWKGHDLTIVSSFEAVGEFTAGRMSQEDFEGVEKNACPTTGSCGGMYTANTMSSSFEALGMSLLYSSTMANPDQEKVDSAAESARVLVEAVKKDLKPRDIITKQSIENAVSVIMATGGSTNAVLHYLAIAHAAEIDWSIEDFERIRKRVPVICDLKPSGQYVATDLHAAGGIPQVMKLLLDAGLLHGDCMTITGRTLAEELKDVPSVPRADQKVIHPIDQALYKEGHLAILKGNLAEDGAVAKITGLKNPVITGPARVFDDEQSALAAILDDRIRAGDVVVLRYLGPQGGPGMPEMLAPTSAIIGKGLGESVGLITDGRFSGGTWGMVVGHVAPEAFVGGTIALVQEGDSITIDAHKLLLQLNVDDAELARRRAAWKQPAPRYTRGVLAKYAALARPANQGAVTG.

Cys50 provides a ligand contact to [2Fe-2S] cluster. Position 82 (Asp82) interacts with Mg(2+). Cys123 provides a ligand contact to [2Fe-2S] cluster. Positions 124 and 125 each coordinate Mg(2+). An N6-carboxylysine modification is found at Lys125. [2Fe-2S] cluster is bound at residue Cys195. Glu447 is a binding site for Mg(2+). Residue Ser473 is the Proton acceptor of the active site.

The protein belongs to the IlvD/Edd family. In terms of assembly, homodimer. Requires [2Fe-2S] cluster as cofactor. Mg(2+) is required as a cofactor.

The enzyme catalyses (2R)-2,3-dihydroxy-3-methylbutanoate = 3-methyl-2-oxobutanoate + H2O. It catalyses the reaction (2R,3R)-2,3-dihydroxy-3-methylpentanoate = (S)-3-methyl-2-oxopentanoate + H2O. It participates in amino-acid biosynthesis; L-isoleucine biosynthesis; L-isoleucine from 2-oxobutanoate: step 3/4. Its pathway is amino-acid biosynthesis; L-valine biosynthesis; L-valine from pyruvate: step 3/4. In terms of biological role, functions in the biosynthesis of branched-chain amino acids. Catalyzes the dehydration of (2R,3R)-2,3-dihydroxy-3-methylpentanoate (2,3-dihydroxy-3-methylvalerate) into 2-oxo-3-methylpentanoate (2-oxo-3-methylvalerate) and of (2R)-2,3-dihydroxy-3-methylbutanoate (2,3-dihydroxyisovalerate) into 2-oxo-3-methylbutanoate (2-oxoisovalerate), the penultimate precursor to L-isoleucine and L-valine, respectively. This is Dihydroxy-acid dehydratase from Burkholderia mallei (strain NCTC 10247).